A 272-amino-acid chain; its full sequence is Orotidine 5'-phosphate decarboxylase (272 aa).

Lys95 (proton donor) is an active-site residue.

This sequence belongs to the OMP decarboxylase family. Type 2 subfamily.

The enzyme catalyses orotidine 5'-phosphate + H(+) = UMP + CO2. It participates in pyrimidine metabolism; UMP biosynthesis via de novo pathway; UMP from orotate: step 2/2. This Cupriavidus necator (strain ATCC 17699 / DSM 428 / KCTC 22496 / NCIMB 10442 / H16 / Stanier 337) (Ralstonia eutropha) protein is Orotidine 5'-phosphate decarboxylase.